A 645-amino-acid chain; its full sequence is Sodium/hydrogen exchanger 9 (645 aa).

The Lumenal portion of the chain corresponds to 1–20 (MERQSRVMSEKDEYQFQHQG). Residues 21–41 (AVELLVFNFLLILTILTIWLF) form a helical membrane-spanning segment. The Cytoplasmic portion of the chain corresponds to 42–45 (KNHR). The chain crosses the membrane as a helical span at residues 46-66 (FRFLHETGGAMVYGLIMGLIL). Topologically, residues 67-126 (RYATAPTDIESGTVYDCVKLTFSPSTLLVNITDQVYEYKYKREISQHNINPHQGNAILEK) are lumenal. Residue Asn-96 is glycosylated (N-linked (GlcNAc...) asparagine). A helical membrane pass occupies residues 127-147 (MTFDPEIFFNVLLPPIIFHAG). Over 148-164 (YSLKKRHFFQNLGSILT) the chain is Cytoplasmic. The helical transmembrane segment at 165-185 (YAFLGTAISCIVIGLIMYGFV) threads the bilayer. The Lumenal portion of the chain corresponds to 186–203 (KAMIHAGQLKNGDFHFTD). The chain crosses the membrane as a helical span at residues 204–224 (CLFFGSLMSATDPVTVLAIFH). Topologically, residues 225–235 (ELHVDPDLYTL) are cytoplasmic. A helical membrane pass occupies residues 236 to 256 (LFGESVLNDAVAIVLTYSISI). Residues 257 to 277 (YSPKENPNAFDAAAFFQSVGN) are Lumenal-facing. A helical transmembrane segment spans residues 278 to 298 (FLGIFAGSFAMGSAYAIITAL). The Cytoplasmic portion of the chain corresponds to 299–301 (LTK). Helical transmembrane passes span 302-322 (FTKL…LSWS) and 323-343 (AFLS…FCGV). Topologically, residues 344-364 (TQAHYTYNNLSSDSKIRTKQL) are cytoplasmic. Residues 365–385 (FEFMNFLAENVIFCYMGLALF) form a helical membrane-spanning segment. A topological domain (lumenal) is located at residue Thr-386. Residues 387–407 (FQNHIFNALFILGAFLAIFVA) traverse the membrane as a helical segment. Over 408-429 (RACNIYPLSFLLNLGRKQKIPW) the chain is Cytoplasmic. A helical membrane pass occupies residues 430–450 (NFQHMMMFSGLRGAIAFALAI). The Lumenal portion of the chain corresponds to 451-465 (RNTESQPKQMMFTTT). Residues 466–486 (LLLVFFTVWVFGGGTTPMLTW) form a helical membrane-spanning segment. Over 487–645 (LQIRVGVDLD…EQTLGQSQLN (159 aa)) the chain is Cytoplasmic. The interval 594–622 (QASSPCSPPARLGLDQKASPQTPGKENIY) is disordered.

This sequence belongs to the monovalent cation:proton antiporter 1 (CPA1) transporter (TC 2.A.36) family. In terms of assembly, homodimer; phosphatidylinositol-4,5-bisphosphate (PIP2) and phosphatidylinositol 3,4,5-trisphosphate (PIP3) could be involved in the dimer stabilization. Interacts (via the C-terminus) with RACK1. Interacts with CHP1. In terms of tissue distribution, ubiquitously expressed in all tissues tested. Expressed at highest levels in heart and skeletal muscle, followed by placenta, kidney, and liver. Expressed in the brain, in the medulla and spinal cord.

The protein localises to the late endosome membrane. It is found in the early endosome membrane. Its subcellular location is the recycling endosome membrane. It localises to the cell membrane. The protein resides in the cytoplasmic vesicle. The protein localises to the phagosome membrane. The enzyme catalyses Na(+)(in) + H(+)(out) = Na(+)(out) + H(+)(in). It carries out the reaction K(+)(in) + H(+)(out) = K(+)(out) + H(+)(in). Its function is as follows. Endosomal Na(+), K(+)/H(+) antiporter. Mediates the electroneutral exchange of endosomal luminal H(+) for a cytosolic Na(+) or K(+). By facilitating proton efflux, SLC9A9 counteracts the acidity generated by vacuolar (V)-ATPase, thereby limiting luminal acidification. Regulates organellar pH and consequently, e.g., endosome maturation and endocytic trafficking of plasma membrane receptors and neurotransporters. Promotes the recycling of transferrin receptors back to the cell surface to facilitate additional iron uptake in the brain. Regulates synaptic transmission by regulating the luminal pH of axonal endosomes. Regulates phagosome lumenal pH, thus affecting phagosome maturation, and consequently, microbicidal activity in macrophages. Can also be active at the cell surface of specialized cells, e.g., in the inner ear hair bundles uses the high K(+) of the endolymph to regulate intracelular pH. This is Sodium/hydrogen exchanger 9 from Homo sapiens (Human).